Consider the following 152-residue polypeptide: Lipoprotein signal peptidase (152 aa).

2 helical membrane passes run 55-75 (NGRWFFVAVAALAVAGILYYL) and 87-107 (VALGLVMGGAVGNMIDRIATG). Active-site residues include aspartate 111 and aspartate 129. Residues 125–145 (FNVADICVTVGVGLLFLHLVL) form a helical membrane-spanning segment.

It belongs to the peptidase A8 family.

It is found in the cell membrane. It catalyses the reaction Release of signal peptides from bacterial membrane prolipoproteins. Hydrolyzes -Xaa-Yaa-Zaa-|-(S,diacylglyceryl)Cys-, in which Xaa is hydrophobic (preferably Leu), and Yaa (Ala or Ser) and Zaa (Gly or Ala) have small, neutral side chains.. It functions in the pathway protein modification; lipoprotein biosynthesis (signal peptide cleavage). In terms of biological role, this protein specifically catalyzes the removal of signal peptides from prolipoproteins. The chain is Lipoprotein signal peptidase from Symbiobacterium thermophilum (strain DSM 24528 / JCM 14929 / IAM 14863 / T).